The following is an 88-amino-acid chain: Small ribosomal subunit protein bS16 (88 aa).

The protein belongs to the bacterial ribosomal protein bS16 family.

In Anaeromyxobacter sp. (strain K), this protein is Small ribosomal subunit protein bS16.